Here is a 70-residue protein sequence, read N- to C-terminus: MPRLPPALRLLQPPLRCWVVPKLHVSAKPARTPTSPAEQAVGLSMMFLSFLVPAGWVLSHLESYKKSSTA.

A mitochondrion-targeting transit peptide spans 1–24 (MPRLPPALRLLQPPLRCWVVPKLH). Residues 25–35 (VSAKPARTPTS) are Mitochondrial matrix-facing. A helical transmembrane segment spans residues 36–59 (PAEQAVGLSMMFLSFLVPAGWVLS). Topologically, residues 60-70 (HLESYKKSSTA) are mitochondrial intermembrane.

Belongs to the cytochrome c oxidase VIII family. As to quaternary structure, component of the cytochrome c oxidase (complex IV, CIV), a multisubunit enzyme composed of 14 subunits. The complex is composed of a catalytic core of 3 subunits MT-CO1, MT-CO2 and MT-CO3, encoded in the mitochondrial DNA, and 11 supernumerary subunits COX4I, COX5A, COX5B, COX6A, COX6B, COX6C, COX7A, COX7B, COX7C, COX8 and NDUFA4, which are encoded in the nuclear genome. The complex exists as a monomer or a dimer and forms supercomplexes (SCs) in the inner mitochondrial membrane with NADH-ubiquinone oxidoreductase (complex I, CI) and ubiquinol-cytochrome c oxidoreductase (cytochrome b-c1 complex, complex III, CIII), resulting in different assemblies (supercomplex SCI(1)III(2)IV(1) and megacomplex MCI(2)III(2)IV(2)).

It is found in the mitochondrion inner membrane. It participates in energy metabolism; oxidative phosphorylation. In terms of biological role, component of the cytochrome c oxidase, the last enzyme in the mitochondrial electron transport chain which drives oxidative phosphorylation. The respiratory chain contains 3 multisubunit complexes succinate dehydrogenase (complex II, CII), ubiquinol-cytochrome c oxidoreductase (cytochrome b-c1 complex, complex III, CIII) and cytochrome c oxidase (complex IV, CIV), that cooperate to transfer electrons derived from NADH and succinate to molecular oxygen, creating an electrochemical gradient over the inner membrane that drives transmembrane transport and the ATP synthase. Cytochrome c oxidase is the component of the respiratory chain that catalyzes the reduction of oxygen to water. Electrons originating from reduced cytochrome c in the intermembrane space (IMS) are transferred via the dinuclear copper A center (CU(A)) of subunit 2 and heme A of subunit 1 to the active site in subunit 1, a binuclear center (BNC) formed by heme A3 and copper B (CU(B)). The BNC reduces molecular oxygen to 2 water molecules using 4 electrons from cytochrome c in the IMS and 4 protons from the mitochondrial matrix. This is Cytochrome c oxidase subunit 8B, mitochondrial (COX8B) from Eulemur fulvus fulvus (Brown lemur).